Reading from the N-terminus, the 494-residue chain is Glutamyl-tRNA(Gln) amidotransferase subunit A, mitochondrial (494 aa).

Active-site charge relay system residues include Lys79 and Ser160. Ser184 (acyl-ester intermediate) is an active-site residue.

Belongs to the amidase family. GatA subfamily. As to quaternary structure, subunit of the heterotrimeric GatCAB amidotransferase (AdT) complex, composed of A, B and C subunits.

The protein resides in the mitochondrion. The enzyme catalyses L-glutamyl-tRNA(Gln) + L-glutamine + ATP + H2O = L-glutaminyl-tRNA(Gln) + L-glutamate + ADP + phosphate + H(+). Functionally, allows the formation of correctly charged Gln-tRNA(Gln) through the transamidation of misacylated Glu-tRNA(Gln) in the mitochondria. The reaction takes place in the presence of glutamine and ATP through an activated gamma-phospho-Glu-tRNA(Gln). In Aedes aegypti (Yellowfever mosquito), this protein is Glutamyl-tRNA(Gln) amidotransferase subunit A, mitochondrial.